We begin with the raw amino-acid sequence, 88 residues long: Small ribosomal subunit protein uS15 (88 aa).

This sequence belongs to the universal ribosomal protein uS15 family. Part of the 30S ribosomal subunit. Forms a bridge to the 50S subunit in the 70S ribosome, contacting the 23S rRNA.

In terms of biological role, one of the primary rRNA binding proteins, it binds directly to 16S rRNA where it helps nucleate assembly of the platform of the 30S subunit by binding and bridging several RNA helices of the 16S rRNA. Its function is as follows. Forms an intersubunit bridge (bridge B4) with the 23S rRNA of the 50S subunit in the ribosome. The polypeptide is Small ribosomal subunit protein uS15 (Polaromonas naphthalenivorans (strain CJ2)).